A 503-amino-acid polypeptide reads, in one-letter code: Cysteine--tRNA ligase (503 aa).

Residue cysteine 31 participates in Zn(2+) binding. Residues 33 to 43 (PTVYDYAHIGN) carry the 'HIGH' region motif. Zn(2+) is bound by residues cysteine 225, histidine 264, and glutamate 268. The 'KMSKS' region signature appears at 297 to 301 (KMSKS). Lysine 300 serves as a coordination point for ATP.

Belongs to the class-I aminoacyl-tRNA synthetase family. In terms of assembly, monomer. It depends on Zn(2+) as a cofactor.

The protein localises to the cytoplasm. The enzyme catalyses tRNA(Cys) + L-cysteine + ATP = L-cysteinyl-tRNA(Cys) + AMP + diphosphate. This chain is Cysteine--tRNA ligase, found in Bartonella tribocorum (strain CIP 105476 / IBS 506).